A 454-amino-acid polypeptide reads, in one-letter code: Phosphoglucosamine mutase (454 aa).

Ser104 acts as the Phosphoserine intermediate in catalysis. Residues Ser104, Asp247, Asp249, and Asp251 each contribute to the Mg(2+) site. Ser104 is modified (phosphoserine).

This sequence belongs to the phosphohexose mutase family. The cofactor is Mg(2+). Post-translationally, activated by phosphorylation.

It carries out the reaction alpha-D-glucosamine 1-phosphate = D-glucosamine 6-phosphate. Its function is as follows. Catalyzes the conversion of glucosamine-6-phosphate to glucosamine-1-phosphate. The polypeptide is Phosphoglucosamine mutase (Bifidobacterium animalis subsp. lactis (strain AD011)).